A 607-amino-acid polypeptide reads, in one-letter code: LRR receptor kinase SERK2 (607 aa).

The N-terminal stretch at 1 to 21 (MRELRVAVLIIAVSLPSFSAS) is a signal peptide. Over 22–219 (DRQGDALYDM…QSGSHSSKIG (198 aa)) the chain is Extracellular. N-linked (GlcNAc...) asparagine glycosylation is found at N36 and N110. LRR repeat units lie at residues 87–110 (LKYL…QFGN), 111–135 (LSSL…LGQL), 136–159 (SKLQ…LAKI), and 160–183 (SSLT…LFQV). Residues N149, N171, N187, and N206 are each glycosylated (N-linked (GlcNAc...) asparagine). A helical transmembrane segment spans residues 220–240 (IVLGTVGGVIGLLIVAALFLF). The Cytoplasmic portion of the chain corresponds to 241 to 607 (CKGRRKSHLR…QEAIELSGGR (367 aa)). The 280-residue stretch at 284 to 563 (FSERNVLGQG…VVRMLEGEGL (280 aa)) folds into the Protein kinase domain. Residues 290-298 (LGQGGFGKV) and K312 each bind ATP. D411 serves as the catalytic Proton acceptor.

Belongs to the protein kinase superfamily. Ser/Thr protein kinase family.

Its subcellular location is the cell membrane. It catalyses the reaction L-seryl-[protein] + ATP = O-phospho-L-seryl-[protein] + ADP + H(+). The catalysed reaction is L-threonyl-[protein] + ATP = O-phospho-L-threonyl-[protein] + ADP + H(+). Its function is as follows. May be involved in the regulation of plant growth through the brassinosteroid (BR) signaling pathway. The sequence is that of LRR receptor kinase SERK2 from Oryza sativa subsp. japonica (Rice).